We begin with the raw amino-acid sequence, 320 residues long: Histidine decarboxylase proenzyme (320 aa).

Residues 2–11 constitute a propeptide that is removed on maturation; sequence NKNLEANRNR. A Pyruvic acid (Ser) modification is found at serine 98. The Proton donor role is filled by glutamate 215.

As to quaternary structure, the proenzyme is a hexamer of identical pi chains; each pi chain monomer is cleaved to form a small (or beta) chain and a large (or alpha) chain by non-hydrolytic self-catalysis. Pyruvate serves as cofactor.

It carries out the reaction L-histidine + H(+) = histamine + CO2. This is Histidine decarboxylase proenzyme (hdc) from Clostridium perfringens (strain 13 / Type A).